Here is a 318-residue protein sequence, read N- to C-terminus: NAC domain-containing protein 68 (318 aa).

One can recognise an NAC domain in the interval 21–175 (LPPGFRFHPT…EWVLCRLYNK (155 aa)).

In terms of tissue distribution, expressed in stems, leaf blades and callus. Weakly expressed in developing flowers.

The protein localises to the nucleus. Probable transcription factor involved in stress response. The chain is NAC domain-containing protein 68 from Oryza sativa subsp. japonica (Rice).